Reading from the N-terminus, the 341-residue chain is Methionine import ATP-binding protein MetN 3 (341 aa).

Residues I2 to V241 enclose the ABC transporter domain. G38–S45 contributes to the ATP binding site.

Belongs to the ABC transporter superfamily. Methionine importer (TC 3.A.1.24) family. As to quaternary structure, the complex is composed of two ATP-binding proteins (MetN), two transmembrane proteins (MetI) and a solute-binding protein (MetQ).

Its subcellular location is the cell membrane. It catalyses the reaction L-methionine(out) + ATP + H2O = L-methionine(in) + ADP + phosphate + H(+). The catalysed reaction is D-methionine(out) + ATP + H2O = D-methionine(in) + ADP + phosphate + H(+). In terms of biological role, part of the ABC transporter complex MetNIQ involved in methionine import. Responsible for energy coupling to the transport system. In Bacillus cereus (strain ZK / E33L), this protein is Methionine import ATP-binding protein MetN 3.